A 362-amino-acid chain; its full sequence is Peptide chain release factor 1 (362 aa).

Position 237 is an N5-methylglutamine (glutamine 237). Over residues 284 to 295 the composition is skewed to basic and acidic residues; that stretch reads EEEKRQAEETST. The disordered stretch occupies residues 284 to 304; it reads EEEKRQAEETSTRRNLVASGD.

It belongs to the prokaryotic/mitochondrial release factor family. In terms of processing, methylated by PrmC. Methylation increases the termination efficiency of RF1.

The protein localises to the cytoplasm. Peptide chain release factor 1 directs the termination of translation in response to the peptide chain termination codons UAG and UAA. This chain is Peptide chain release factor 1, found in Pseudoalteromonas atlantica (strain T6c / ATCC BAA-1087).